We begin with the raw amino-acid sequence, 610 residues long: Butyryl-CoA dehydrogenase Swol_2052 (610 aa).

Glutamate 451 (proton acceptor) is an active-site residue.

This sequence belongs to the acyl-CoA dehydrogenase family. Requires FAD as cofactor.

It localises to the cytoplasm. It catalyses the reaction butanoyl-CoA + oxidized [electron-transfer flavoprotein] + H(+) = (2E)-butenoyl-CoA + reduced [electron-transfer flavoprotein]. It carries out the reaction a short-chain 2,3-saturated fatty acyl-CoA + oxidized [electron-transfer flavoprotein] + H(+) = a short-chain (2E)-enoyl-CoA + reduced [electron-transfer flavoprotein]. The protein operates within lipid metabolism; butanoate metabolism. Its function is as follows. Involved in syntrophic growth of S.wolfei with butyrate, as part of the butyrate oxidation pathway. Catalyzes the oxidation of butanoyl-CoA to crotonyl-CoA. Probably passes the electrons released by this reaction on to electron-transfer flavoproteins (EtfAB) to finally generate hydrogen and/or formate. This chain is Butyryl-CoA dehydrogenase Swol_2052, found in Syntrophomonas wolfei subsp. wolfei (strain DSM 2245B / Goettingen).